The following is a 612-amino-acid chain: Lysophospholipase (612 aa).

Residues D1–R9 form the signal peptide. The 548-residue stretch at S24 to N571 folds into the PLA2c domain. N41, N81, N116, N150, N223, N267, N306, N335, N427, N440, N446, N477, N498, N526, N532, N567, and N571 each carry an N-linked (GlcNAc...) asparagine glycan.

This sequence belongs to the lysophospholipase family. N-glycosylated.

It is found in the secreted. It catalyses the reaction a 1-acyl-sn-glycero-3-phosphocholine + H2O = sn-glycerol 3-phosphocholine + a fatty acid + H(+). Functionally, catalyzes the release of fatty acids from lysophospholipids. The polypeptide is Lysophospholipase (Penicillium chrysogenum (Penicillium notatum)).